We begin with the raw amino-acid sequence, 994 residues long: MLKLLRNNGINKLKSNLIRNYSTKQSIFQALDTFPKRHIGPNENEINEMLKSINTSKLSKKNPNSLEQLIEYTIPKDIRLNRELNIEENKVIGENQLLKDLKKIAEKNKVYRSFIGMGYYGTITPHVIQRNILENPGWYTPYTPYQAEISQGRLESLLNFQTMVSEFTGLPMSNASLLDEATAAAEAMQMCVNISKSKGPFAFLVDKYCHPQTIDTIKTRAEPKGIRIEVVDSKDFKFTEDVVGCIVQYPSSNGVITDYKEMADRAHQANALVVAATDLLSLALLKPPGEWGADIALGNSQRFGVPLGFGGPHAAFFSTKDKYARLLPGRIIGVSKDKQGNSAFRMALQTREQHIRREKATSNICTSQALLANMSAMYAVYHGQQGIKDIANAVHRKAIILAEGIKRLGYTVLDRPFFDTVLIITGDKTDMMIKELESRQINVRQYCSKSISISLDETVTSADISALLNGFSAHASKPLGLSSPEQLEKETSTISVISEEFARQTPFLTHPIFNRYHSEHELLRYIHKLQKKDLGLTTAMIPLGSCTMKLNATTEMYPVSWPEFNSIHPFVPANQSLGYKEMFESISNMLCEVTGFDGCSLQPNAGSQGEYAGLMVIRSYLTSIGQSQRNVCLIPVSAHGTNPASAAMVGMKVVVVDCDTNGNIDVADLKAKAEKHKDTLAALMITYPSTHGVFEEGANDICDIIHANGGQVYMDGANMNAQVGLCRPGDIGADVCHLNLHKTFCIPHGGGGPGMGPICVKSHLAPFLPGHSVVKGVGGERAMSAVSAGPWGSSSILPITYVYLKLMGGQGLKKATQVAILNANYMASRLKDHYKILYTGSHGLVAHEFIIDLRMFKESAGIEAEDVAKRLQDMNFHGPTMSWPVPNTLMIEPTESESKYELDRLCDALILIREEIREIETGKADRKNNVLVNSPHTEKVIVADNWNYPYSRSKAAFPTPATVASKFWPTVGRIDNVHGDKNLVCSCPPLSDYQ.

The N-terminal 21 residues, 1-21 (MLKLLRNNGINKLKSNLIRNY), are a transit peptide targeting the mitochondrion. At Lys742 the chain carries N6-(pyridoxal phosphate)lysine.

It belongs to the GcvP family. In terms of assembly, homodimer. The glycine cleavage system is composed of four proteins: P, T, L and H. Pyridoxal 5'-phosphate is required as a cofactor.

Its subcellular location is the mitochondrion. It catalyses the reaction N(6)-[(R)-lipoyl]-L-lysyl-[glycine-cleavage complex H protein] + glycine + H(+) = N(6)-[(R)-S(8)-aminomethyldihydrolipoyl]-L-lysyl-[glycine-cleavage complex H protein] + CO2. In terms of biological role, the glycine cleavage system catalyzes the degradation of glycine. The P protein binds the alpha-amino group of glycine through its pyridoxal phosphate cofactor; CO(2) is released and the remaining methylamine moiety is then transferred to the lipoamide cofactor of the H protein. The protein is Glycine dehydrogenase (decarboxylating), mitochondrial (gcvP) of Dictyostelium discoideum (Social amoeba).